The chain runs to 504 residues: Catalase (504 aa).

Catalysis depends on residues His-56 and Asn-129. Tyr-339 lines the heme pocket.

It belongs to the catalase family. In terms of assembly, homodimer. Heme is required as a cofactor.

The enzyme catalyses 2 H2O2 = O2 + 2 H2O. Its function is as follows. Decomposes hydrogen peroxide into water and oxygen; serves to protect cells from the toxic effects of hydrogen peroxide. The polypeptide is Catalase (katA) (Staphylococcus epidermidis).